Reading from the N-terminus, the 429-residue chain is Glutamate-1-semialdehyde 2,1-aminomutase (429 aa).

Lysine 265 carries the N6-(pyridoxal phosphate)lysine modification.

This sequence belongs to the class-III pyridoxal-phosphate-dependent aminotransferase family. HemL subfamily. As to quaternary structure, homodimer. The cofactor is pyridoxal 5'-phosphate.

It is found in the cytoplasm. It catalyses the reaction (S)-4-amino-5-oxopentanoate = 5-aminolevulinate. The protein operates within porphyrin-containing compound metabolism; protoporphyrin-IX biosynthesis; 5-aminolevulinate from L-glutamyl-tRNA(Glu): step 2/2. The protein is Glutamate-1-semialdehyde 2,1-aminomutase of Alkalilimnicola ehrlichii (strain ATCC BAA-1101 / DSM 17681 / MLHE-1).